The sequence spans 451 residues: MPREIITLQLGQCGNQIGFEFWKQLCAEHGISPEGIVEEFATEGTDRKDVFFYQADDEHYIPRAVLLDLEPRVIHSILNSPYAKLYNPENIYLSEHGGGAGNNWASGFSQGEKIHEDIFDIIDREADGSDSLEGFVLCHSIAGGTGSGLGSYLLERLNDRYPKKLVQTYSVFPNQDEMSDVVVQPYNSLLTLKRLTQNADCVVVLDNTALNRIATDRLHIQNPSFSQINQLVSTIMSASTTTLRYPGYMNNDLIGLIASLIPTPRLHFLMTGYTPLTTDQSVASVRKTTVLDVMRRLLQPKNVMVSTGRDRQTNHCYIAILNIIQGEVDPTQVHKSLQRIRERKLANFIPWGPASIQVALSRKSPYLPSAHRVSGLMMANHTSISSLFERTCRQYDKLRKREAFLEQFRKEDMFKDNFDEMDTSREIVQQLIDEYHAATRPDYISWGTQEQ.

A Phosphoserine; by BRSK1 modification is found at serine 131. 142–148 is a binding site for GTP; sequence AGGTGSG.

It belongs to the tubulin family. In terms of assembly, component of the gamma-tubulin ring complex (gTuRC) consisting of TUBGCP2, TUBGCP3, TUBGCP4, TUBGCP5 and TUBGCP6 and gamma-tubulin TUBG1 or TUBG2. TUBGCP2, TUBGCP3, TUBGCP4, TUBGCP5 and TUBGCP6 assemble in a 5:5:2:1:1 stoichiometry; each is associated with a gamma-tubulin, thereby arranging 14 gamma-tubulins in a helical manner. Gamma-tubulin at the first position is blocked by TUBGCP3 at the last position, allowing 13 protafilaments to grow into a microtubule. The gTuRC (via TUBGCP3 and TUBGCP6) interacts with ACTB and MZT1; the interactions form a luminal bridge that stabilizes the initial structure during complex assembly. The gTuRC (via TUBGCP2) interacts with MZT2A/MZT2B and CDK5RAP2 (via CM1 motif); the interactions play a role in gTuRC activation. Interacts with alpha-beta tubulin heterodimers; the interaction allows microtubules to nucleate from the gTuRC. Interacts with B9D2. Interacts with CDK5RAP2; the interaction is leading to centrosomal localization of TUBG1 and CDK5RAP2. Interacts with CIMAP3. Interacts with SAS6 and NUP62 at the centrosome. Interacts with EML3 (phosphorylated at 'Thr-881') and HAUS8. Interacts with DNM2; this interaction may participate in centrosome cohesion. Interacts with CCDC66. Phosphorylation at Ser-131 by BRSK1 regulates centrosome duplication, possibly by mediating relocation of gamma-tubulin and its associated proteins from the cytoplasm to the centrosome.

The protein resides in the cytoplasm. The protein localises to the cytoskeleton. Its subcellular location is the microtubule organizing center. It is found in the centrosome. It localises to the spindle. In terms of biological role, tubulin is the major constituent of microtubules, protein filaments consisting of alpha- and beta-tubulin heterodimers. Gamma-tubulin is a key component of the gamma-tubulin ring complex (gTuRC) which mediates microtubule nucleation. The gTuRC regulates the minus-end nucleation of alpha-beta tubulin heterodimers that grow into microtubule protafilaments, a critical step in centrosome duplication and spindle formation. The sequence is that of Tubulin gamma-1 chain from Homo sapiens (Human).